Consider the following 402-residue polypeptide: Zinc finger protein 587B (402 aa).

Residues 15–91 (VTFEDVAVKF…PVTGVSPKKA (77 aa)) enclose the KRAB domain. The segment at 92–114 (HPCEMCGPILGDILHVADHQGTH) adopts a C2H2-type 1 zinc-finger fold. The C2H2-type 2; degenerate zinc-finger motif lies at 120 to 142 (HRCEAWGNKLYDSGNFHQHQNEH). Glycyl lysine isopeptide (Lys-Gly) (interchain with G-Cter in SUMO2) cross-links involve residues Lys-177, Lys-200, and Lys-253. C2H2-type zinc fingers lie at residues 242 to 264 (YVCC…QRVH), 270 to 292 (YECG…QQFH), 298 to 320 (YGCE…QKVH), 326 to 348 (YECG…QRIH), and 354 to 383 (YKCG…WVDH). Lys-366 participates in a covalent cross-link: Glycyl lysine isopeptide (Lys-Gly) (interchain with G-Cter in SUMO2).

Belongs to the krueppel C2H2-type zinc-finger protein family.

Its subcellular location is the nucleus. Its function is as follows. May be involved in transcriptional regulation. The polypeptide is Zinc finger protein 587B (ZNF587B) (Homo sapiens (Human)).